The following is a 265-amino-acid chain: Undecaprenyl-diphosphatase (265 aa).

Transmembrane regions (helical) follow at residues 7-27 (VIVS…PISS), 45-65 (TKIL…YFFH), 86-106 (LHIL…YKKI), 108-128 (LLFN…FLLI), 145-165 (ISLL…YPGF), 186-206 (IEFS…YDFI), 214-234 (ILDL…SILC), and 245-265 (TSLI…YFIN).

It belongs to the UppP family.

The protein localises to the cell membrane. The catalysed reaction is di-trans,octa-cis-undecaprenyl diphosphate + H2O = di-trans,octa-cis-undecaprenyl phosphate + phosphate + H(+). Functionally, catalyzes the dephosphorylation of undecaprenyl diphosphate (UPP). Confers resistance to bacitracin. The polypeptide is Undecaprenyl-diphosphatase (Buchnera aphidicola subsp. Acyrthosiphon pisum (strain 5A)).